A 170-amino-acid polypeptide reads, in one-letter code: Head completion protein (170 aa).

It is found in the virion. Head completion protein that closes the capsid once the viral DNA has been packaged. Probably part of the head-tail connector by binding to the portal protein and to the tail completion protein. This Escherichia coli (Enterobacteria phage T5) protein is Head completion protein.